We begin with the raw amino-acid sequence, 959 residues long: Isoleucine--tRNA ligase (959 aa).

Positions 60–70 match the 'HIGH' region motif; that stretch reads PYANGSLHIGH. Residue glutamate 571 coordinates L-isoleucyl-5'-AMP. The 'KMSKS' region motif lies at 612–616; sequence KMSKS. Lysine 615 is an ATP binding site. Zn(2+) is bound by residues cysteine 928, cysteine 931, cysteine 948, and cysteine 951.

Belongs to the class-I aminoacyl-tRNA synthetase family. IleS type 1 subfamily. In terms of assembly, monomer. It depends on Zn(2+) as a cofactor.

The protein resides in the cytoplasm. The catalysed reaction is tRNA(Ile) + L-isoleucine + ATP = L-isoleucyl-tRNA(Ile) + AMP + diphosphate. Catalyzes the attachment of isoleucine to tRNA(Ile). As IleRS can inadvertently accommodate and process structurally similar amino acids such as valine, to avoid such errors it has two additional distinct tRNA(Ile)-dependent editing activities. One activity is designated as 'pretransfer' editing and involves the hydrolysis of activated Val-AMP. The other activity is designated 'posttransfer' editing and involves deacylation of mischarged Val-tRNA(Ile). The protein is Isoleucine--tRNA ligase of Nostoc punctiforme (strain ATCC 29133 / PCC 73102).